Here is an 84-residue protein sequence, read N- to C-terminus: MAYLKIVLVALMLVLAVSAMRRPDQQDQDISVAKRVACKCDDDGPDIRSATLTGTVDLGSCDEGWEKCASYYTVIADCCRRPRS.

Residues 1 to 19 form the signal peptide; it reads MAYLKIVLVALMLVLAVSA. Positions 20–33 are excised as a propeptide; sequence MRRPDQQDQDISVA. 3 disulfides stabilise this stretch: C38-C78, C40-C68, and C61-C79.

Belongs to the sea anemone sodium channel inhibitory toxin family. Type II subfamily.

The protein localises to the secreted. It localises to the nematocyst. Binds specifically to the voltage-gated sodium channel (Nav) and delays its inactivation. This is Delta-thalatoxin-Tas1a from Thalassianthus aster (Fuzzy-tipped anemone).